The chain runs to 1363 residues: Vascular endothelial growth factor receptor 3 (1363 aa).

A signal peptide spans 1-24; the sequence is MQPGAALNLRLWLCLGLLQGLANG. Residues 25 to 775 lie on the Extracellular side of the membrane; that stretch reads YSMTPPTLNI…EGSEDKGSME (751 aa). Asparagine 33, asparagine 104, asparagine 166, asparagine 251, asparagine 299, and asparagine 411 each carry an N-linked (GlcNAc...) asparagine glycan. Ig-like C2-type domains lie at 44–118, 151–213, 230–326, 331–415, 422–552, 555–671, and 678–764; these read GDSL…YIKA, KDSM…WGDQ, YDIQ…TEVI, PFIS…ISLE, PHIH…FYVT, PDGF…KYLS, and PRLT…ASVA. 2 disulfide bridges follow: cysteine 51–cysteine 111 and cysteine 158–cysteine 206. Cysteine 252 and cysteine 310 form a disulfide bridge. Disulfide bonds link cysteine 445/cysteine 534, cysteine 466/cysteine 486, and cysteine 578/cysteine 653. N-linked (GlcNAc...) asparagine glycans are attached at residues asparagine 515, asparagine 527, asparagine 582, asparagine 594, asparagine 683, and asparagine 690. A disulfide bond links cysteine 699 and cysteine 751. An N-linked (GlcNAc...) asparagine glycan is attached at asparagine 758. Residues 776–796 form a helical membrane-spanning segment; it reads IVILIGTGVIAVFFWVLLLLI. Over 797–1363 the chain is Cytoplasmic; sequence FCNMKRPAHA…GSTFFADSSY (567 aa). 2 positions are modified to phosphotyrosine; by SRC: tyrosine 830 and tyrosine 833. The Protein kinase domain maps to 845–1173; it reads LHLGRVLGHG…DLVEILGDLL (329 aa). Residues 851 to 859 and lysine 879 each bind ATP; that span reads LGHGAFGKV. Aspartate 1037 functions as the Proton acceptor in the catalytic mechanism. The residue at position 1063 (tyrosine 1063) is a Phosphotyrosine; by autocatalysis and SRC. Phosphotyrosine; by autocatalysis occurs at positions 1068, 1230, 1231, and 1265. The segment at 1288-1330 is disordered; sequence ESRHRPEGSFSCKGPGQHMDIPRGHPDPQGRRRRPTQGAQGGK. The span at 1307–1317 shows a compositional bias: basic and acidic residues; sequence DIPRGHPDPQG. Phosphotyrosine; by autocatalysis and SRC occurs at positions 1333 and 1337. Tyrosine 1363 carries the post-translational modification Phosphotyrosine; by autocatalysis.

Belongs to the protein kinase superfamily. Tyr protein kinase family. CSF-1/PDGF receptor subfamily. In terms of assembly, interacts with VEGFC and VEGFD. Monomer in the absence of bound VEGFC or VEGFD. Homodimer in the presence of bound VEGFC or VEGFD. Can also form a heterodimer with KDR. Interacts with PTPN14; the interaction is enhanced by stimulation with VEGFC. Interacts with CRK, GRB2, PTK2/FAK1, SHC1, PIK3R1 and PTPN11/SHP-2. Identified in a complex with SRC and ITGB1. Autophosphorylated on tyrosine residues upon ligand binding. Autophosphorylation occurs in trans, i.e. one subunit of the dimeric receptor phosphorylates tyrosine residues on the other subunit. Phosphorylation in response to H(2)O(2) is mediated by a process that requires SRC and PRKCD activity. Phosphorylation at Tyr-1068 is required for autophosphorylation at additional tyrosine residues. Phosphorylation at Tyr-1063 and Tyr-1337 is important for interaction with CRK and subsequent activation of MAPK8. Phosphorylation at Tyr-1230, Tyr-1231 and Tyr-1337 is important for interaction with GRB2 and subsequent activation of the AKT1 and MAPK1/ERK2 and/or MAPK3/ERK1 signaling pathways. In response to endothelial cell adhesion onto collagen, can also be phosphorylated in the absence of FLT4 kinase activity by SRC. Expressed in adult lung and liver, and in fetal liver, brain, intestine and placenta.

The protein resides in the cell membrane. It localises to the cytoplasm. The protein localises to the nucleus. The enzyme catalyses L-tyrosyl-[protein] + ATP = O-phospho-L-tyrosyl-[protein] + ADP + H(+). With respect to regulation, present in an inactive conformation in the absence of bound ligand. Binding of VEGFC or VEGFD leads to dimerization and activation by autophosphorylation on tyrosine residues. In terms of biological role, tyrosine-protein kinase that acts as a cell-surface receptor for VEGFC and VEGFD, and plays an essential role in adult lymphangiogenesis and in the development of the vascular network and the cardiovascular system during embryonic development. Promotes proliferation, survival and migration of endothelial cells, and regulates angiogenic sprouting. Signaling by activated FLT4 leads to enhanced production of VEGFC, and to a lesser degree VEGFA, thereby creating a positive feedback loop that enhances FLT4 signaling. Modulates KDR signaling by forming heterodimers. Mediates activation of the MAPK1/ERK2, MAPK3/ERK1 signaling pathway, of MAPK8 and the JUN signaling pathway, and of the AKT1 signaling pathway. Phosphorylates SHC1. Mediates phosphorylation of PIK3R1, the regulatory subunit of phosphatidylinositol 3-kinase. Promotes phosphorylation of MAPK8 at 'Thr-183' and 'Tyr-185', and of AKT1 at 'Ser-473'. In Mus musculus (Mouse), this protein is Vascular endothelial growth factor receptor 3 (Flt4).